The sequence spans 271 residues: Putative phosphoenolpyruvate synthase regulatory protein (271 aa).

ADP is bound at residue 152–159 (GVSRCGKT).

The protein belongs to the pyruvate, phosphate/water dikinase regulatory protein family. PSRP subfamily.

It carries out the reaction [pyruvate, water dikinase] + ADP = [pyruvate, water dikinase]-phosphate + AMP + H(+). It catalyses the reaction [pyruvate, water dikinase]-phosphate + phosphate + H(+) = [pyruvate, water dikinase] + diphosphate. Its function is as follows. Bifunctional serine/threonine kinase and phosphorylase involved in the regulation of the phosphoenolpyruvate synthase (PEPS) by catalyzing its phosphorylation/dephosphorylation. The polypeptide is Putative phosphoenolpyruvate synthase regulatory protein (Legionella pneumophila (strain Paris)).